A 622-amino-acid polypeptide reads, in one-letter code: Phosphoribomutase (622 aa).

Substrate contacts are provided by residues threonine 57, arginine 61, serine 158 to histidine 159, and lysine 168. Serine 158 (phosphoserine intermediate) is an active-site residue. A Mg(2+)-binding site is contributed by serine 158. Serine 158 carries the post-translational modification Phosphoserine. Mg(2+) contacts are provided by aspartate 325, aspartate 327, and aspartate 329. Substrate is bound by residues aspartate 329–arginine 330, threonine 404, glutamate 428–alanine 430, and lysine 442.

The protein belongs to the phosphohexose mutase family. The cofactor is Mg(2+).

Its subcellular location is the cytoplasm. The protein resides in the nucleus. It catalyses the reaction alpha-D-ribose 1-phosphate = D-ribose 5-phosphate. Major phosphoribomutase that converts ribose 1-phosphate to ribose 5-phosphate. Involved in ribose salvage via the pentose phosphate pathway. The chain is Phosphoribomutase from Saccharomyces cerevisiae (strain ATCC 204508 / S288c) (Baker's yeast).